The sequence spans 373 residues: NAD-dependent protein deacylase SRT2 (373 aa).

The transit peptide at 1–47 (MNMRRVFGGVSTDLFPSRSMYRPLQSGGNLVMLFKGCRRFVRTTCRV) directs the protein to the mitochondrion. The Deacetylase sirtuin-type domain occupies 75 to 373 (DPPNMEDIHK…DVGSLSVPAL (299 aa)). NAD(+) contacts are provided by residues 100-120 (GAGV…GAYS) and 179-182 (QNVD). The Proton acceptor role is filled by histidine 196. Residues cysteine 204, cysteine 207, cysteine 271, and cysteine 274 each contribute to the Zn(2+) site. NAD(+) is bound by residues 311–313 (GSS), 337–339 (NIG), and valine 355.

It belongs to the sirtuin family. Class II subfamily. In terms of assembly, binds to the promoter region of genes influenced by ethylene. Interacts with ENAP1; this interaction is enhanced in the presence of ethylene. Requires Zn(2+) as cofactor.

It is found in the mitochondrion matrix. The protein localises to the nucleus. The catalysed reaction is N(6)-acetyl-L-lysyl-[protein] + NAD(+) + H2O = 2''-O-acetyl-ADP-D-ribose + nicotinamide + L-lysyl-[protein]. NAD-dependent protein deacylase. Catalyzes the NAD-dependent hydrolysis of acyl groups from lysine residues. Involved in responses to ethylene leading to the transcriptional repression of some ethylene-responsive genes via the regulation of histone acetylation H3K9Ac. Negatively regulates plant basal defense against plant pathogens, possibly by suppressing salicylic acid biosynthesis. This is NAD-dependent protein deacylase SRT2 from Arabidopsis thaliana (Mouse-ear cress).